The primary structure comprises 218 residues: N-(5'-phosphoribosyl)anthranilate isomerase (218 aa).

Belongs to the TrpF family.

It catalyses the reaction N-(5-phospho-beta-D-ribosyl)anthranilate = 1-(2-carboxyphenylamino)-1-deoxy-D-ribulose 5-phosphate. It participates in amino-acid biosynthesis; L-tryptophan biosynthesis; L-tryptophan from chorismate: step 3/5. The protein is N-(5'-phosphoribosyl)anthranilate isomerase of Lachnoclostridium phytofermentans (strain ATCC 700394 / DSM 18823 / ISDg) (Clostridium phytofermentans).